Reading from the N-terminus, the 202-residue chain is Dephospho-CoA kinase (202 aa).

In terms of domain architecture, DPCK spans 6-202 (KISVTGDPSS…QCFKALKGTI (197 aa)). 14–19 (SSGKTE) contributes to the ATP binding site.

Belongs to the CoaE family.

The protein resides in the cytoplasm. The catalysed reaction is 3'-dephospho-CoA + ATP = ADP + CoA + H(+). It participates in cofactor biosynthesis; coenzyme A biosynthesis; CoA from (R)-pantothenate: step 5/5. In terms of biological role, catalyzes the phosphorylation of the 3'-hydroxyl group of dephosphocoenzyme A to form coenzyme A. This chain is Dephospho-CoA kinase, found in Chlamydia muridarum (strain MoPn / Nigg).